The following is a 146-amino-acid chain: Thyroid hormone-inducible hepatic protein (146 aa).

Residues 83–104 (KVAGSEENGTAETEEVEDESAS) are disordered. Over residues 94 to 104 (ETEEVEDESAS) the composition is skewed to acidic residues.

The protein belongs to the SPOT14 family. As to quaternary structure, homodimer. Heterodimer with MID1IP1. Interacts with THRB and PLAGL1. As to expression, mainly expressed in tissues that synthesize triglycerides.

It localises to the nucleus. The protein localises to the cytoplasm. Its function is as follows. Plays a role in the regulation of lipogenesis, especially in lactating mammary gland. Important for the biosynthesis of triglycerides with medium-length fatty acid chains. May modulate lipogenesis by interacting with MID1IP1 and preventing its interaction with ACACA. May function as transcriptional coactivator. May modulate the transcription factor activity of THRB. The chain is Thyroid hormone-inducible hepatic protein (THRSP) from Homo sapiens (Human).